The primary structure comprises 193 residues: Phosphoheptose isomerase (193 aa).

The SIS domain occupies 37 to 193 (LADSFKVGGK…QLIEKEMVKA (157 aa)). 52–54 (NGG) is a binding site for substrate. Residues His-61 and Glu-65 each coordinate Zn(2+). Substrate is bound by residues Glu-65, 93-94 (ND), 119-121 (STS), Ser-124, and Gln-172. Zn(2+) contacts are provided by Gln-172 and His-180.

This sequence belongs to the SIS family. GmhA subfamily. Homotetramer. Requires Zn(2+) as cofactor.

It is found in the cytoplasm. It carries out the reaction 2 D-sedoheptulose 7-phosphate = D-glycero-alpha-D-manno-heptose 7-phosphate + D-glycero-beta-D-manno-heptose 7-phosphate. It functions in the pathway carbohydrate biosynthesis; D-glycero-D-manno-heptose 7-phosphate biosynthesis; D-glycero-alpha-D-manno-heptose 7-phosphate and D-glycero-beta-D-manno-heptose 7-phosphate from sedoheptulose 7-phosphate: step 1/1. Its pathway is bacterial outer membrane biogenesis; LPS core biosynthesis. Its function is as follows. Catalyzes the isomerization of sedoheptulose 7-phosphate in D-glycero-D-manno-heptose 7-phosphate. The sequence is that of Phosphoheptose isomerase from Photorhabdus laumondii subsp. laumondii (strain DSM 15139 / CIP 105565 / TT01) (Photorhabdus luminescens subsp. laumondii).